We begin with the raw amino-acid sequence, 314 residues long: Porphobilinogen deaminase (314 aa).

Position 249 is an S-(dipyrrolylmethanemethyl)cysteine (cysteine 249).

Belongs to the HMBS family. As to quaternary structure, monomer. Requires dipyrromethane as cofactor.

The enzyme catalyses 4 porphobilinogen + H2O = hydroxymethylbilane + 4 NH4(+). It functions in the pathway porphyrin-containing compound metabolism; protoporphyrin-IX biosynthesis; coproporphyrinogen-III from 5-aminolevulinate: step 2/4. Its function is as follows. Tetrapolymerization of the monopyrrole PBG into the hydroxymethylbilane pre-uroporphyrinogen in several discrete steps. This is Porphobilinogen deaminase from Brucella suis biovar 1 (strain 1330).